Here is a 461-residue protein sequence, read N- to C-terminus: Phosphoglucosamine mutase (461 aa).

Serine 118 functions as the Phosphoserine intermediate in the catalytic mechanism. Mg(2+)-binding residues include serine 118, aspartate 255, aspartate 257, and aspartate 259. Residue serine 118 is modified to Phosphoserine.

The protein belongs to the phosphohexose mutase family. The cofactor is Mg(2+). Post-translationally, activated by phosphorylation.

The enzyme catalyses alpha-D-glucosamine 1-phosphate = D-glucosamine 6-phosphate. Its function is as follows. Catalyzes the conversion of glucosamine-6-phosphate to glucosamine-1-phosphate. The polypeptide is Phosphoglucosamine mutase (Acidothermus cellulolyticus (strain ATCC 43068 / DSM 8971 / 11B)).